We begin with the raw amino-acid sequence, 88 residues long: uncharacterized protein (88 aa).

Transmembrane regions (helical) follow at residues 8-28 (IFLSFFSPIYLSLLLNGSIFF) and 45-65 (ELLRCQICLCSLFWMVTVINL).

The protein resides in the membrane. This is an uncharacterized protein from Saccharomyces cerevisiae (strain ATCC 204508 / S288c) (Baker's yeast).